A 345-amino-acid polypeptide reads, in one-letter code: Serine proteinase inhibitor 2 (345 aa).

This sequence belongs to the serpin family. Poxviruses subfamily.

It localises to the host cytoplasm. Viral serpin that inhibits both cysteine and serine proteinases involved in the regulation of host inflammatory and apoptosis processes. Major anti-apoptotic protein which inhibits both intrinsic and extrinsic pathways and strongly cleaves host CASP1 and CASP8 but is a rather poor inhibitor of host CASP3. Prevents the proteolytic activity of host interleukin-1-beta converting enzyme (ICE) and ICE-like enzymes. Can also block apoptosis through host tumor necrosis factor (TNF) receptor. The inhibition of host ICE is an example of a 'cross-class' interaction, in which a serpin inhibits a non-serine proteinase. Also inhibits granzyme B. The polypeptide is Serine proteinase inhibitor 2 (OPG199) (Rabbitpox virus (strain Utrecht) (RPV)).